The chain runs to 305 residues: MLKQRTIKSLVKTVGIGLHSGRKVTLTLRPAPADTGIVFTRVDLPEAVEIPAAAGAIGDTRLASVLQKDGARVSTVEHLMSACAGLGIDNLYVDVDAEEIPIMDGSAASFVFLLQSAGIEQQNAAKRFIRVKKAVEVREGDKLARLEPFFGFKLSFTIDFRHPAVDKTGQNFEIDFADTSYVREIARARTFGFAHEVEALREMGLARGGSLDNAIVLDEHRMLNNEELRYGDEFVRHKILDAIGDLYVVGHPLIGAYVAHKSGHGLNNQLLRALLADQEAYEVVTFDRMEDAPVAFLPQVQPAFA.

The Zn(2+) site is built by histidine 78, histidine 237, and aspartate 241. Histidine 264 acts as the Proton donor in catalysis.

The protein belongs to the LpxC family. Zn(2+) serves as cofactor.

It catalyses the reaction a UDP-3-O-[(3R)-3-hydroxyacyl]-N-acetyl-alpha-D-glucosamine + H2O = a UDP-3-O-[(3R)-3-hydroxyacyl]-alpha-D-glucosamine + acetate. It functions in the pathway glycolipid biosynthesis; lipid IV(A) biosynthesis; lipid IV(A) from (3R)-3-hydroxytetradecanoyl-[acyl-carrier-protein] and UDP-N-acetyl-alpha-D-glucosamine: step 2/6. Functionally, catalyzes the hydrolysis of UDP-3-O-myristoyl-N-acetylglucosamine to form UDP-3-O-myristoylglucosamine and acetate, the committed step in lipid A biosynthesis. This is UDP-3-O-acyl-N-acetylglucosamine deacetylase from Cupriavidus pinatubonensis (strain JMP 134 / LMG 1197) (Cupriavidus necator (strain JMP 134)).